A 507-amino-acid chain; its full sequence is CWF19-like protein DRN1 (507 aa).

A Phosphoserine modification is found at serine 242.

The protein belongs to the CWF19 family. As to quaternary structure, interacts with DBR1. Interacts with SYF1, a component of the NTC complex. Interacts with lariat-introns and lariat-intermediates.

The protein localises to the nucleus. Its subcellular location is the cytoplasm. In terms of biological role, involved in branched RNA metabolism, modulating the turnover of lariat-intron pre-mRNAs by the lariat-debranching enzyme DBR1. Enhances the debranching activity of DBR1 in vitro. In Saccharomyces cerevisiae (strain ATCC 204508 / S288c) (Baker's yeast), this protein is CWF19-like protein DRN1 (DRN1).